The chain runs to 580 residues: Acyl--CoA ligase GME11374 (580 aa).

This sequence belongs to the ATP-dependent AMP-binding enzyme family.

It participates in secondary metabolite biosynthesis. Its function is as follows. Acyl--CoA ligase; part of the gene cluster that mediates the biosynthesis of dibenzodioxocinones such as pestalotiollide B, a novel class of inhibitors against cholesterol ester transfer protein (CEPT). The biosynthesis initiates from condensation of acetate and malonate units catalyzed by the non-reducing PKS pks8/GME11356. Pks8/GME11356 lacks a thioesterase (TE) domain, which is important to the cyclizing of the third ring of atrochrysone carboxylic acid, and the esterase GME11355 might play the role of TE and catalyzes the cyclization reaction of the C ring. The lactamase-like protein GME11357 (or other beta-lactamases in Pestalotiopsis microspora) probably hydrolyzes the thioester bond between the ACP of pks8/GME11356 and the intermediate to release atrochrysone carboxylic acid, which is spontaneously dehydrates to form endocrocin anthrone. Endocrocin anthrone is further converted to emodin via the endocrocin intermediate. Emodin is then oxidized by several enzymes such as the Baeyer-Villiger oxidase GME11358, the oxidoreductase GME11367, the short chain dehydrogenase/reductase GME11373, as well as by other oxidoreductases from the cluster, to modify the A and C rings and open the B ring, and finally yield monodictyphenone. The prenyltransferase GME11375 may catalyze the addition reaction between the C5 side chains and the carbon bone of dibenzodioxocinones. The remaining biochemical reactions to the final product dibenzodioxocinones should be methylation catalyzed by methyltransferase GME11366 and reduction and lactonization reaction catalyzed by a series of oxidordeuctases. The polypeptide is Acyl--CoA ligase GME11374 (Pestalotiopsis microspora).